Here is a 162-residue protein sequence, read N- to C-terminus: MQHLVLIGFMGSGKSSLAQELGLALKLEVLDTDMIISERVGLSVRGIFEELGEDNFRMFEKNLIDELKTLKTPHIISTGGGIVMHENLKGLGTTFYLKMDFETLIKRLNQKEREKRPLLNNLTQAKELFEKRQALYEKNASFIIDARGGLNNSLKQVLQFIA.

11–16 is an ATP binding site; that stretch reads GSGKSS. A Mg(2+)-binding site is contributed by Ser15. The substrate site is built by Asp33, Arg57, and Gly80. Residue Arg116 coordinates ATP. Arg132 serves as a coordination point for substrate.

The protein belongs to the shikimate kinase family. In terms of assembly, monomer. Requires Mg(2+) as cofactor.

The protein localises to the cytoplasm. The enzyme catalyses shikimate + ATP = 3-phosphoshikimate + ADP + H(+). It functions in the pathway metabolic intermediate biosynthesis; chorismate biosynthesis; chorismate from D-erythrose 4-phosphate and phosphoenolpyruvate: step 5/7. Its function is as follows. Catalyzes the specific phosphorylation of the 3-hydroxyl group of shikimic acid using ATP as a cosubstrate. The protein is Shikimate kinase of Helicobacter pylori (strain J99 / ATCC 700824) (Campylobacter pylori J99).